Consider the following 300-residue polypeptide: MTEENSLRCGYVAIVGRPNVGKSTLLNHILGQKLAITSRKPQTTRHNMLGIKTEGDVQAIYVDTPGLHKQNDKALNRYMNKTASAALKDVDVVIFVVDRMRWTEEDQLVLDRLQYVQGPVLVAVNKADRLEDKVELLPHLQWLAQQLPNAEIVPISALHGHNLDTLERLVAGRLPQGEHFFPEDQITDRSSRFLAAELVREKIMRQLGAELPYQVTVEIEDFKQQGQVLHIHALILVEREGQKKIIIGEKGERIKRIGQEARQGMEVLFDSKVMLNLWVKVKGGWSDDERALHSLGYRDS.

Residues 8-176 enclose the Era-type G domain; that stretch reads RCGYVAIVGR…ERLVAGRLPQ (169 aa). The segment at 16-23 is G1; the sequence is GRPNVGKS. A GTP-binding site is contributed by 16-23; that stretch reads GRPNVGKS. Positions 42-46 are G2; sequence QTTRH. The G3 stretch occupies residues 63–66; the sequence is DTPG. Residues 63 to 67 and 125 to 128 contribute to the GTP site; these read DTPGL and NKAD. Positions 125-128 are G4; the sequence is NKAD. Positions 155 to 157 are G5; that stretch reads ISA. A KH type-2 domain is found at 199–283; sequence VREKIMRQLG…MLNLWVKVKG (85 aa).

It belongs to the TRAFAC class TrmE-Era-EngA-EngB-Septin-like GTPase superfamily. Era GTPase family. Monomer.

The protein localises to the cytoplasm. It is found in the cell inner membrane. In terms of biological role, an essential GTPase that binds both GDP and GTP, with rapid nucleotide exchange. Plays a role in 16S rRNA processing and 30S ribosomal subunit biogenesis and possibly also in cell cycle regulation and energy metabolism. This is GTPase Era from Azotobacter vinelandii (strain DJ / ATCC BAA-1303).